The primary structure comprises 106 residues: Nucleoid-associated protein bll8115 (106 aa).

It belongs to the YbaB/EbfC family. As to quaternary structure, homodimer.

The protein localises to the cytoplasm. The protein resides in the nucleoid. In terms of biological role, binds to DNA and alters its conformation. May be involved in regulation of gene expression, nucleoid organization and DNA protection. This Bradyrhizobium diazoefficiens (strain JCM 10833 / BCRC 13528 / IAM 13628 / NBRC 14792 / USDA 110) protein is Nucleoid-associated protein bll8115.